The sequence spans 419 residues: Probable pectate lyase C (419 aa).

A signal peptide spans 1-19 (MRLTPSLISCLSLLHFTSA). Residues Asn-48, Asn-164, and Asn-201 are each glycosylated (N-linked (GlcNAc...) asparagine). Arg-204 is an active-site residue. An EF-hand domain is found at 261 to 296 (NENFHAYVETNYYDSDKDGTLNGSELGVDSTNYGGM). Ca(2+) contacts are provided by Asp-274, Asp-276, Asp-278, and Thr-280. An N-linked (GlcNAc...) asparagine glycan is attached at Asn-282. A Ca(2+)-binding site is contributed by Glu-285. A disordered region spans residues 352 to 395 (ISDEADMGGAGDLDQGTTPTDTDGDGIPDDAEAELGTDPNTADS). Positions 363 to 372 (DLDQGTTPTD) are enriched in low complexity. Residues 373-386 (TDGDGIPDDAEAEL) show a composition bias toward acidic residues.

This sequence belongs to the polysaccharide lyase 1 family. The cofactor is Ca(2+).

The protein resides in the secreted. The catalysed reaction is Eliminative cleavage of (1-&gt;4)-alpha-D-galacturonan to give oligosaccharides with 4-deoxy-alpha-D-galact-4-enuronosyl groups at their non-reducing ends.. Functionally, pectinolytic enzyme consist of four classes of enzymes: pectin lyase, polygalacturonase, pectin methylesterase and rhamnogalacturonase. Among pectinolytic enzymes, pectin lyase is the most important in depolymerization of pectin, since it cleaves internal glycosidic bonds of highly methylated pectins. Favors pectate, the anion, over pectin, the methyl ester. The polypeptide is Probable pectate lyase C (plyC) (Aspergillus oryzae (strain ATCC 42149 / RIB 40) (Yellow koji mold)).